Consider the following 329-residue polypeptide: GTPase Obg (329 aa).

The region spanning 2–160 (YNFKDSVSIT…LNVRLELFLV (159 aa)) is the Obg domain. In terms of domain architecture, OBG-type G spans 161 to 327 (ADIGLVGPPN…LIKEFFILAK (167 aa)). Residues 167–174 (GPPNAGKS), 192–196 (FTTKI), 213–216 (DIPG), 280–283 (NKLD), and 308–310 (SIY) each bind GTP. Residues S174 and T194 each coordinate Mg(2+).

The protein belongs to the TRAFAC class OBG-HflX-like GTPase superfamily. OBG GTPase family. Monomer. The cofactor is Mg(2+).

It is found in the cytoplasm. Functionally, an essential GTPase which binds GTP, GDP and possibly (p)ppGpp with moderate affinity, with high nucleotide exchange rates and a fairly low GTP hydrolysis rate. Plays a role in control of the cell cycle, stress response, ribosome biogenesis and in those bacteria that undergo differentiation, in morphogenesis control. In Borrelia garinii subsp. bavariensis (strain ATCC BAA-2496 / DSM 23469 / PBi) (Borreliella bavariensis), this protein is GTPase Obg.